A 623-amino-acid chain; its full sequence is Kelch repeat and BTB domain-containing protein 12 (623 aa).

Positions 31–98 constitute a BTB domain; it reads IDVVLTAEGE…MYNAALEINN (68 aa). Residues 133–235 form the BACK domain; the sequence is CLGIYYFAKQ…NPSFLRQALR (103 aa). Kelch repeat units lie at residues 386–436, 437–492, 494–547, and 553–603; these read DLYV…TVNN, KLYV…VVNS, IYVL…STNA, and KLYV…LVAR.

This Homo sapiens (Human) protein is Kelch repeat and BTB domain-containing protein 12 (KBTBD12).